The chain runs to 338 residues: DNA-directed RNA polymerase subunit alpha (338 aa).

Residues 1–234 (MIQKNWQELT…DQLNVFVNFE (234 aa)) form an alpha N-terminal domain (alpha-NTD) region. An alpha C-terminal domain (alpha-CTD) region spans residues 250-338 (FNPALLKKVD…DLAKRFEEHY (89 aa)).

Belongs to the RNA polymerase alpha chain family. As to quaternary structure, homodimer. The RNAP catalytic core consists of 2 alpha, 1 beta, 1 beta' and 1 omega subunit. When a sigma factor is associated with the core the holoenzyme is formed, which can initiate transcription.

The enzyme catalyses RNA(n) + a ribonucleoside 5'-triphosphate = RNA(n+1) + diphosphate. Its function is as follows. DNA-dependent RNA polymerase catalyzes the transcription of DNA into RNA using the four ribonucleoside triphosphates as substrates. The chain is DNA-directed RNA polymerase subunit alpha from Methylocella silvestris (strain DSM 15510 / CIP 108128 / LMG 27833 / NCIMB 13906 / BL2).